The primary structure comprises 280 residues: Probable ketoamine kinase lp_1983 (280 aa).

87–89 contributes to the ATP binding site; it reads DWL. Asp-189 functions as the Proton acceptor in the catalytic mechanism.

The protein belongs to the fructosamine kinase family.

The enzyme catalyses N(6)-(D-ribulosyl)-L-lysine + ATP = N(6)-(3-O-phospho-D-ribulosyl)-L-lysine + ADP + H(+). It catalyses the reaction N-(D-ribulosyl)-cadaverine + ATP = N-(3-O-phospho-D-ribulosyl)-cadaverine + ADP + H(+). It carries out the reaction N(6)-(D-erythrulosyl)-L-lysine + ATP = N(6)-(3-O-phospho-D-erythrulosyl)-L-lysine + ADP + H(+). The catalysed reaction is N-(D-erythrulosyl)-cadaverine + ATP = N-(3-O-phospho-D-erythrulosyl)-cadaverine + ADP + H(+). The enzyme catalyses N(6)-D-ribulosyl-L-lysyl-[protein] + ATP = N(6)-(3-O-phospho-D-ribulosyl)-L-lysyl-[protein] + ADP + H(+). It catalyses the reaction N(6)-(D-erythrulosyl)-L-lysyl-[protein] + ATP = N(6)-(3-O-phospho-D-erythrulosyl)-L-lysyl-[protein] + ADP + H(+). Functionally, ketoamine kinase that phosphorylates ketoamines, such as erythruloselysine, erythrulosecadaverine, ribuloselysine and ribulosecadaverine, on the third carbon of the sugar moiety to generate ketoamine 3-phosphate. Has higher activity on free lysine (erythruloselysine and ribuloselysine), than on ribuloselysine and erythruloselysine residues on glycated proteins. The protein is Probable ketoamine kinase lp_1983 of Lactiplantibacillus plantarum (strain ATCC BAA-793 / NCIMB 8826 / WCFS1) (Lactobacillus plantarum).